We begin with the raw amino-acid sequence, 128 residues long: Calcitonin gene-related peptide 1 (128 aa).

An N-terminal signal peptide occupies residues 1–25; it reads MGFLKFSPFLVVSILLLYQACSLQA. Residues 26-80 constitute a propeptide that is removed on maturation; sequence VPLRSILESSPGMATLSEEEVRLLAALVQDYMQMKARELEQEEEQEAEGSSVTAQ. Cysteines 84 and 89 form a disulfide. Phenylalanine amide is present on F119. Positions 125 to 128 are excised as a propeptide; that stretch reads DLQA.

Belongs to the calcitonin family. Detected in nerve cells of cerebrum, hippocampus and pons/midbrain in newborns, and only in nerve cells of pons/midbrain in adult.

The protein localises to the secreted. In terms of biological role, CGRP1/CALCA is a peptide hormone that induces vasodilation mediated by the CALCRL-RAMP1 receptor complex. Dilates a variety of vessels including the coronary, cerebral and systemic vasculature. Its abundance in the CNS also points toward a neurotransmitter or neuromodulator role. It also elevates platelet cAMP. CGRP1 can also bind and activate CALCR-RAMP1 (AMYR1) receptor complex. The sequence is that of Calcitonin gene-related peptide 1 from Mus musculus (Mouse).